The primary structure comprises 48 residues: Cytochrome b559 subunit beta (48 aa).

Residues 23–39 (WLAVHALAIPSVFFLGA) form a helical membrane-spanning segment. His27 serves as a coordination point for heme.

Belongs to the PsbE/PsbF family. In terms of assembly, heterodimer of an alpha subunit and a beta subunit. PSII is composed of 1 copy each of membrane proteins PsbA, PsbB, PsbC, PsbD, PsbE, PsbF, PsbH, PsbI, PsbJ, PsbK, PsbL, PsbM, PsbT, PsbX, PsbY, Psb30/Ycf12, peripheral proteins PsbO, CyanoQ (PsbQ), PsbU, PsbV and a large number of cofactors. It forms dimeric complexes. Heme b is required as a cofactor.

It localises to the cellular thylakoid membrane. Its function is as follows. This b-type cytochrome is tightly associated with the reaction center of photosystem II (PSII). PSII is a light-driven water:plastoquinone oxidoreductase that uses light energy to abstract electrons from H(2)O, generating O(2) and a proton gradient subsequently used for ATP formation. It consists of a core antenna complex that captures photons, and an electron transfer chain that converts photonic excitation into a charge separation. The sequence is that of Cytochrome b559 subunit beta from Prochlorococcus marinus (strain MIT 9515).